The sequence spans 459 residues: Putrescine aminotransferase (459 aa).

Pyridoxal 5'-phosphate contacts are provided by residues 150–151 (GT) and Q274. K300 carries the post-translational modification N6-(pyridoxal phosphate)lysine. Position 332 (T332) interacts with pyridoxal 5'-phosphate.

It belongs to the class-III pyridoxal-phosphate-dependent aminotransferase family. Putrescine aminotransferase subfamily. Pyridoxal 5'-phosphate serves as cofactor.

The catalysed reaction is an alkane-alpha,omega-diamine + 2-oxoglutarate = an omega-aminoaldehyde + L-glutamate. It carries out the reaction putrescine + 2-oxoglutarate = 1-pyrroline + L-glutamate + H2O. It catalyses the reaction cadaverine + 2-oxoglutarate = 5-aminopentanal + L-glutamate. Its pathway is amine and polyamine degradation; putrescine degradation; 4-aminobutanal from putrescine (transaminase route): step 1/1. Catalyzes the aminotransferase reaction from putrescine to 2-oxoglutarate, leading to glutamate and 4-aminobutanal, which spontaneously cyclizes to form 1-pyrroline. This is the first step in one of two pathways for putrescine degradation, where putrescine is converted into 4-aminobutanoate (gamma-aminobutyrate or GABA) via 4-aminobutanal. Also functions as a cadaverine transaminase in a a L-lysine degradation pathway to succinate that proceeds via cadaverine, glutarate and L-2-hydroxyglutarate. This is Putrescine aminotransferase from Shigella boydii serotype 4 (strain Sb227).